The following is a 73-amino-acid chain: Long neurotoxin 3 (73 aa).

Cystine bridges form between cysteine 3/cysteine 21, cysteine 14/cysteine 42, cysteine 27/cysteine 31, cysteine 46/cysteine 57, and cysteine 58/cysteine 63.

Belongs to the three-finger toxin family. Long-chain subfamily. Type II alpha-neurotoxin sub-subfamily. In terms of tissue distribution, expressed by the venom gland.

It localises to the secreted. Functionally, binds with high affinity to muscular (alpha-1/CHRNA1) and neuronal (alpha-7/CHRNA7) nicotinic acetylcholine receptor (nAChR) and inhibits acetylcholine from binding to the receptor, thereby impairing neuromuscular and neuronal transmission. The chain is Long neurotoxin 3 from Ophiophagus hannah (King cobra).